Consider the following 38-residue polypeptide: GTTCYCGSTLGIYWFAVSSCPSGRGYTGHCGYFLGLCC.

3 cysteine pairs are disulfide-bonded: Cys4-Cys37, Cys6-Cys30, and Cys20-Cys38.

It belongs to the sea anemone type 3 (BDS) potassium channel toxin family.

Its subcellular location is the secreted. The protein resides in the nematocyst. Functionally, possible modulator of crustacean voltage-gated sodium channels (Nav). This is Toxin Bcg III 31.16 from Bunodosoma cangicum (Sea anemone).